Consider the following 1226-residue polypeptide: Arf guanine nucleotide exchange factor SYT1 (1226 aa).

Disordered regions lie at residues 17 to 39 (HSND…DKLR) and 113 to 158 (RNGQ…RNSK). The span at 131-142 (SIEKVPKPDGER) shows a compositional bias: basic and acidic residues. Residue Thr-277 is modified to Phosphothreonine. 3 disordered regions span residues 311 to 405 (NSLM…TGMS), 954 to 1022 (STGS…NEDY), and 1178 to 1198 (LEHG…DGID). Residues 349-360 (LSRSRSQSTSFV) are compositionally biased toward polar residues. Ser-369 bears the Phosphoserine mark. A compositionally biased stretch (polar residues) spans 386–405 (GPTSVYNNKSNANSTITGMS). Residues 405 to 620 (SRRSSSIVNA…TYFYENVTAK (216 aa)) enclose the SEC7 domain. The region spanning 844–1074 (ILQMGAIMNL…DSINLFSAYD (231 aa)) is the PH domain. Low complexity-rich tracts occupy residues 956–969 (GSHT…SSSA) and 994–1017 (SSVS…SSND).

It is found in the cytoplasm. With respect to regulation, inhibited by brefeldin A. Guanine nucleotide exchange factor for Arf GTPases, stimulating the nucleotide exchange from the GDP-bound to the GTP-bound form. Catalyzes both the GDP release by and the GTP binding to ARF2. Has no exchange activity on Rab GTPases. Involved in vesicular transport. The protein is Arf guanine nucleotide exchange factor SYT1 (SYT1) of Saccharomyces cerevisiae (strain ATCC 204508 / S288c) (Baker's yeast).